Here is a 469-residue protein sequence, read N- to C-terminus: 3-isopropylmalate dehydratase large subunit (469 aa).

[4Fe-4S] cluster-binding residues include cysteine 347, cysteine 408, and cysteine 411.

The protein belongs to the aconitase/IPM isomerase family. LeuC type 1 subfamily. In terms of assembly, heterodimer of LeuC and LeuD. It depends on [4Fe-4S] cluster as a cofactor.

The catalysed reaction is (2R,3S)-3-isopropylmalate = (2S)-2-isopropylmalate. It participates in amino-acid biosynthesis; L-leucine biosynthesis; L-leucine from 3-methyl-2-oxobutanoate: step 2/4. Its function is as follows. Catalyzes the isomerization between 2-isopropylmalate and 3-isopropylmalate, via the formation of 2-isopropylmaleate. The protein is 3-isopropylmalate dehydratase large subunit of Haemophilus influenzae (strain 86-028NP).